Reading from the N-terminus, the 449-residue chain is ATP-dependent protease ATPase subunit HslU (449 aa).

ATP-binding positions include I18, 60–65, D261, E327, and R399; that span reads GVGKTE.

The protein belongs to the ClpX chaperone family. HslU subfamily. A double ring-shaped homohexamer of HslV is capped on each side by a ring-shaped HslU homohexamer. The assembly of the HslU/HslV complex is dependent on binding of ATP.

The protein localises to the cytoplasm. Its function is as follows. ATPase subunit of a proteasome-like degradation complex; this subunit has chaperone activity. The binding of ATP and its subsequent hydrolysis by HslU are essential for unfolding of protein substrates subsequently hydrolyzed by HslV. HslU recognizes the N-terminal part of its protein substrates and unfolds these before they are guided to HslV for hydrolysis. This chain is ATP-dependent protease ATPase subunit HslU, found in Oleidesulfovibrio alaskensis (strain ATCC BAA-1058 / DSM 17464 / G20) (Desulfovibrio alaskensis).